Consider the following 274-residue polypeptide: Penicillin-insensitive murein endopeptidase (274 aa).

An N-terminal signal peptide occupies residues 1 to 19 (MNKTAIALLALLASSASLA). Disulfide bonds link Cys-44–Cys-265, Cys-187–Cys-235, and Cys-216–Cys-223. Positions 110, 113, 120, 147, 150, and 211 each coordinate Zn(2+). The segment at 227–274 (PLPPPGDGCGAELQSWFEPPKPGTTKPEKKTPPPLPPSCQALLDEHVI) is disordered.

It belongs to the peptidase M74 family. In terms of assembly, dimer. It depends on Zn(2+) as a cofactor.

The protein localises to the periplasm. Murein endopeptidase that cleaves the D-alanyl-meso-2,6-diamino-pimelyl amide bond that connects peptidoglycan strands. Likely plays a role in the removal of murein from the sacculus. In Escherichia coli O9:H4 (strain HS), this protein is Penicillin-insensitive murein endopeptidase.